Here is a 305-residue protein sequence, read N- to C-terminus: NAD kinase 2 (305 aa).

Residue D78 is the Proton acceptor of the active site. Residues 78–79 (DG), 152–153 (NE), D182, 193–198 (TAYSLS), and N251 contribute to the NAD(+) site.

It belongs to the NAD kinase family. Requires a divalent metal cation as cofactor.

It is found in the cytoplasm. The enzyme catalyses NAD(+) + ATP = ADP + NADP(+) + H(+). Involved in the regulation of the intracellular balance of NAD and NADP, and is a key enzyme in the biosynthesis of NADP. Catalyzes specifically the phosphorylation on 2'-hydroxyl of the adenosine moiety of NAD to yield NADP. This is NAD kinase 2 from Synechococcus sp. (strain ATCC 27144 / PCC 6301 / SAUG 1402/1) (Anacystis nidulans).